The primary structure comprises 592 residues: Beta-fructofuranosidase, insoluble isoenzyme 2 (592 aa).

The N-terminal stretch at 1–40 is a signal peptide; the sequence is MLIRCFHIKMALVTCFHSMLFLSAVVFIFSLDVNIRGVEA. Aspartate 75 is an active-site residue. Asparagine 171, asparagine 195, asparagine 310, asparagine 347, and asparagine 568 each carry an N-linked (GlcNAc...) asparagine glycan.

It belongs to the glycosyl hydrolase 32 family.

The protein resides in the secreted. The protein localises to the cell wall. It catalyses the reaction Hydrolysis of terminal non-reducing beta-D-fructofuranoside residues in beta-D-fructofuranosides.. In terms of biological role, may play an important role in phloem unloading and in stress response. This Daucus carota (Wild carrot) protein is Beta-fructofuranosidase, insoluble isoenzyme 2 (INV2).